A 136-amino-acid chain; its full sequence is Small ribosomal subunit protein uS9 (136 aa).

The interval 97–136 (SPDNRKPLKTEGHLSRDPRAKERRKYGLKKARKAPQFSKR) is disordered. Over residues 98-116 (PDNRKPLKTEGHLSRDPRA) the composition is skewed to basic and acidic residues. Basic residues predominate over residues 117–136 (KERRKYGLKKARKAPQFSKR).

This sequence belongs to the universal ribosomal protein uS9 family.

This is Small ribosomal subunit protein uS9 from Prochlorococcus marinus (strain MIT 9215).